We begin with the raw amino-acid sequence, 561 residues long: Mercuric reductase (561 aa).

Positions 2–65 constitute an HMA domain; the sequence is THLKITGMTC…AVAGLGYKAT (64 aa). A metal cation is bound by residues Cys11 and Cys14. 3 residues coordinate FAD: Ala110, Gly130, and Thr135. A disulfide bond links Cys136 and Cys141. Lys145, Ala211, Asp403, and Val411 together coordinate FAD. 2 residues coordinate Hg(2+): Cys558 and Cys559.

It belongs to the class-I pyridine nucleotide-disulfide oxidoreductase family. As to quaternary structure, homodimer. FAD is required as a cofactor.

The catalysed reaction is Hg + NADP(+) + H(+) = Hg(2+) + NADPH. Functionally, resistance to Hg(2+) in bacteria appears to be governed by a specialized system which includes mercuric reductase. MerA protein is responsible for volatilizing mercury as Hg(0). Plays a pivotal role in mercury resistance under thiol-depleted conditions and cell protection. Protects cells under thiol-depleted conditions. This is Mercuric reductase (merA) from Pseudomonas aeruginosa.